The chain runs to 216 residues: MOB kinase activator 3B (216 aa).

Residues Cys-82, Cys-87, His-164, and His-169 each coordinate Zn(2+).

Belongs to the MOB1/phocein family.

Modulates LATS1 expression in the Hippo signaling pathway which plays a pivotal role in organ size control and tumor suppression by restricting proliferation and promoting apoptosis. The chain is MOB kinase activator 3B from Homo sapiens (Human).